The primary structure comprises 493 residues: Transcript termination protein A18 (493 aa).

The 157-residue stretch at 100–256 folds into the Helicase ATP-binding domain; sequence MIELKRPLYI…NSIINIAKLS (157 aa). 113–120 contributes to the ATP binding site; sequence LACGFGKT. The DESH box motif lies at 206-209; it reads DESH.

Belongs to the helicase family. Poxviruses subfamily. In terms of assembly, interacts with G2. Might be part of a transcription complex composed at least of G2, A18, and H5.

It is found in the virion. Its function is as follows. DNA helicase which seems to act as a postreplicative transcription termination factor. Involved in ATP-dependent release of nascent RNA. Forms a stable complex with single-stranded DNA, and to a lesser extent RNA. The chain is Transcript termination protein A18 from Camelus.